We begin with the raw amino-acid sequence, 130 residues long: Protein ApaG (130 aa).

The ApaG domain maps to 3-127 (SAVTQDIQIT…FSLDSPFVRR (125 aa)).

The chain is Protein ApaG from Methylocella silvestris (strain DSM 15510 / CIP 108128 / LMG 27833 / NCIMB 13906 / BL2).